The primary structure comprises 125 residues: Small ribosomal subunit protein eS8 (125 aa).

It belongs to the eukaryotic ribosomal protein eS8 family. In terms of assembly, part of the 30S ribosomal subunit.

This is Small ribosomal subunit protein eS8 from Methanosarcina barkeri (strain Fusaro / DSM 804).